The primary structure comprises 132 residues: Fatty acid-binding protein, brain (132 aa).

Residue Val2 is modified to N-acetylvaline. 127–129 contacts a fatty acid; that stretch reads RHY.

The protein belongs to the calycin superfamily. Fatty-acid binding protein (FABP) family.

The protein localises to the cytoplasm. Functionally, FABPs are thought to play a role in the intracellular transport of long-chain fatty acids and their acyl-CoA esters. The polypeptide is Fatty acid-binding protein, brain (FABP7) (Gallus gallus (Chicken)).